Here is a 99-residue protein sequence, read N- to C-terminus: Putative septation protein SpoVG (99 aa).

Belongs to the SpoVG family.

Functionally, could be involved in septation. This is Putative septation protein SpoVG from Myxococcus xanthus (strain DK1622).